Reading from the N-terminus, the 421-residue chain is Thymidine phosphorylase (421 aa).

Belongs to the thymidine/pyrimidine-nucleoside phosphorylase family. Homodimer.

The catalysed reaction is thymidine + phosphate = 2-deoxy-alpha-D-ribose 1-phosphate + thymine. Its function is as follows. The enzymes which catalyze the reversible phosphorolysis of pyrimidine nucleosides are involved in the degradation of these compounds and in their utilization as carbon and energy sources, or in the rescue of pyrimidine bases for nucleotide synthesis. This Mycoplasma pneumoniae (strain ATCC 29342 / M129 / Subtype 1) (Mycoplasmoides pneumoniae) protein is Thymidine phosphorylase (deoA).